A 488-amino-acid chain; its full sequence is Beta-xylosidase (488 aa).

The active-site Proton donor is the Glu163. The active-site Nucleophile is the Glu275.

The protein belongs to the glycosyl hydrolase 39 family.

The enzyme catalyses Hydrolysis of (1-&gt;4)-beta-D-xylans, to remove successive D-xylose residues from the non-reducing termini.. Beta-xylosidase is an intracellular xylan-degrading enzyme. In Caldicellulosiruptor saccharolyticus (Caldocellum saccharolyticum), this protein is Beta-xylosidase (xynB).